Reading from the N-terminus, the 307-residue chain is N-acetylmuramic acid 6-phosphate etherase (307 aa).

Residues 62-225 form the SIS domain; the sequence is IVAAFQKGGR…TTASMIRIGK (164 aa). Catalysis depends on glutamate 90, which acts as the Proton donor. Residue glutamate 121 is part of the active site.

It belongs to the GCKR-like family. MurNAc-6-P etherase subfamily. In terms of assembly, homodimer.

It carries out the reaction N-acetyl-D-muramate 6-phosphate + H2O = N-acetyl-D-glucosamine 6-phosphate + (R)-lactate. It functions in the pathway amino-sugar metabolism; 1,6-anhydro-N-acetylmuramate degradation. It participates in amino-sugar metabolism; N-acetylmuramate degradation. Its pathway is cell wall biogenesis; peptidoglycan recycling. Its function is as follows. Specifically catalyzes the cleavage of the D-lactyl ether substituent of MurNAc 6-phosphate, producing GlcNAc 6-phosphate and D-lactate. Together with AnmK, is also required for the utilization of anhydro-N-acetylmuramic acid (anhMurNAc) either imported from the medium or derived from its own cell wall murein, and thus plays a role in cell wall recycling. This chain is N-acetylmuramic acid 6-phosphate etherase, found in Rhizobium rhizogenes (strain K84 / ATCC BAA-868) (Agrobacterium radiobacter).